The sequence spans 481 residues: Tryptophan--tRNA ligase, cytoplasmic (481 aa).

Positions 12–68 constitute a WHEP-TRS domain; that stretch reads SPLELFNSIATQGELVRSLKAGNAPKDEIDSAVKMLLSLKMSYKAAMGEEYKAGCPP. An N6-succinyllysine modification is found at Lys158. The 'HIGH' region signature appears at 168–177; the sequence is PSSEAMHLGH. Positions 353-357 match the 'KMSKS' region motif; the sequence is KMSAS. Phosphoserine is present on Ser355.

The protein belongs to the class-I aminoacyl-tRNA synthetase family. Homodimer. Interacts with oxidized form of GAPDH. Post-translationally, proteolytic cleavage generates 2 forms; T1-TrpRS and T2-TrpRS. Isoform 2 is widely expressed, isoform 1 is found only in embryonic stem cells.

It is found in the cytoplasm. The enzyme catalyses tRNA(Trp) + L-tryptophan + ATP = L-tryptophyl-tRNA(Trp) + AMP + diphosphate + H(+). Functionally, catalyzes the attachment of tryptophan to tRNA(Trp) in a two-step reaction: tryptophan is first activated by ATP to form Trp-AMP and then transferred to the acceptor end of the tRNA(Trp). Could also possess an angiostatic activity. The polypeptide is Tryptophan--tRNA ligase, cytoplasmic (Mus musculus (Mouse)).